Reading from the N-terminus, the 117-residue chain is Immunoglobulin kappa variable 1-33 (117 aa).

Residues 1–22 form the signal peptide; that stretch reads MDMRVPAQLLGLLLLWLSGARC. A framework-1 region spans residues 23–45; sequence DIQMTQSPSSLSASVGDRVTITC. The Ig-like domain maps to 24 to 117; it reads IQMTQSPSSL…YYCQQYDNLP (94 aa). An intrachain disulfide couples Cys45 to Cys110. Positions 46–56 are complementarity-determining-1; sequence QASQDISNYLN. A framework-2 region spans residues 57 to 71; the sequence is WYQQKPGKAPKLLIY. The segment at 72-78 is complementarity-determining-2; it reads DASNLET. A framework-3 region spans residues 79–110; the sequence is GVPSRFSGSGSGTDFTFTISSLQPEDIATYYC. The segment at 111 to 117 is complementarity-determining-3; sequence QQYDNLP.

Immunoglobulins are composed of two identical heavy chains and two identical light chains; disulfide-linked.

Its subcellular location is the secreted. The protein resides in the cell membrane. Its function is as follows. V region of the variable domain of immunoglobulin light chains that participates in the antigen recognition. Immunoglobulins, also known as antibodies, are membrane-bound or secreted glycoproteins produced by B lymphocytes. In the recognition phase of humoral immunity, the membrane-bound immunoglobulins serve as receptors which, upon binding of a specific antigen, trigger the clonal expansion and differentiation of B lymphocytes into immunoglobulins-secreting plasma cells. Secreted immunoglobulins mediate the effector phase of humoral immunity, which results in the elimination of bound antigens. The antigen binding site is formed by the variable domain of one heavy chain, together with that of its associated light chain. Thus, each immunoglobulin has two antigen binding sites with remarkable affinity for a particular antigen. The variable domains are assembled by a process called V-(D)-J rearrangement and can then be subjected to somatic hypermutations which, after exposure to antigen and selection, allow affinity maturation for a particular antigen. The chain is Immunoglobulin kappa variable 1-33 from Homo sapiens (Human).